A 153-amino-acid polypeptide reads, in one-letter code: Large ribosomal subunit protein uL30 (153 aa).

It belongs to the universal ribosomal protein uL30 family. In terms of assembly, part of the 50S ribosomal subunit.

The chain is Large ribosomal subunit protein uL30 from Methanocorpusculum labreanum (strain ATCC 43576 / DSM 4855 / Z).